The sequence spans 98 residues: Keratin-associated protein 3-1 (98 aa).

The residue at position 2 (Ala-2) is an N-acetylalanine. A run of 4 repeats spans residues 3-7 (CCAPR), 8-12 (CCSVR), 47-51 (FCDNS), and 55-59 (YHVPD). The tract at residues 3–59 (CCAPRCCSVRTGPATTICSSDQFCRCGVCLPSTCPHDISLLQPTFCDNSPVPYHVPD) is 4 X 5 AA repeats of C-C-X(3).

This sequence belongs to the KRTAP type 3 family. In terms of assembly, interacts with wool keratins. In terms of tissue distribution, wool.

In terms of biological role, in the wool cortex, wool keratin intermediate filaments are embedded in an interfilamentous matrix, consisting of hair keratin-associated proteins (KRTAP), which are essential for the formation of a rigid and resistant wool shaft through their extensive disulfide bond cross-linking with abundant cysteine residues of wool keratins. The matrix proteins include the high-sulfur and high-glycine-tyrosine keratins. The sequence is that of Keratin-associated protein 3-1 (KRTAP3-1) from Capra hircus (Goat).